The chain runs to 439 residues: Argininosuccinate lyase (439 aa).

This sequence belongs to the lyase 1 family. Argininosuccinate lyase subfamily.

It is found in the cytoplasm. It carries out the reaction 2-(N(omega)-L-arginino)succinate = fumarate + L-arginine. The protein operates within amino-acid biosynthesis; L-arginine biosynthesis; L-arginine from L-ornithine and carbamoyl phosphate: step 3/3. This chain is Argininosuccinate lyase, found in Caldanaerobacter subterraneus subsp. tengcongensis (strain DSM 15242 / JCM 11007 / NBRC 100824 / MB4) (Thermoanaerobacter tengcongensis).